The primary structure comprises 551 residues: Membrane protein insertase YidC (551 aa).

Residues 3-23 traverse the membrane as a helical segment; that stretch reads ANHIRILLLVTIAIMLISLMG. The span at 30 to 43 shows a compositional bias: low complexity; it reads PSNSSQSQTTQTQQ. The segment at 30–61 is disordered; the sequence is PSNSSQSQTTQTQQDNSHYNSDTPATTNVSTS. The segment covering 44 to 61 has biased composition (polar residues); that stretch reads DNSHYNSDTPATTNVSTS. 3 helical membrane passes run 361-381, 431-451, and 504-524; these read LVGNWGLAIILVTCLIKLIFY, LSGCLPMLIQIPIFISLYWVL, and IMMFLPVIFTFLFASFPSGLV.

Belongs to the OXA1/ALB3/YidC family. Type 1 subfamily. In terms of assembly, interacts with the Sec translocase complex via SecD. Specifically interacts with transmembrane segments of nascent integral membrane proteins during membrane integration.

It is found in the cell inner membrane. Its function is as follows. Required for the insertion and/or proper folding and/or complex formation of integral membrane proteins into the membrane. Involved in integration of membrane proteins that insert both dependently and independently of the Sec translocase complex, as well as at least some lipoproteins. Aids folding of multispanning membrane proteins. The sequence is that of Membrane protein insertase YidC from Francisella philomiragia subsp. philomiragia (strain ATCC 25017 / CCUG 19701 / FSC 153 / O#319-036).